The following is a 516-amino-acid chain: Apolipoprotein N-acyltransferase (516 aa).

5 consecutive transmembrane segments (helical) span residues 23 to 43, 68 to 88, 94 to 114, 135 to 155, and 178 to 198; these read ILILLLAAALAGAFTLFAFAP, AFWLGYAWGLGAYVSNFRWIY, VAGLPAWIAAPLVLLLPAYLA, WLLAFPAAWELGEWLRGWVMT, and LGGIHLVNYLVALSAAALAML. The region spanning 241 to 481 is the CN hydrolase domain; that stretch reads AQGNIAQELK…VLTGFAQSRQ (241 aa). Glutamate 279 acts as the Proton acceptor in catalysis. Lysine 339 is an active-site residue. The active-site Nucleophile is the cysteine 391. The chain crosses the membrane as a helical span at residues 489–509; it reads FGNLPVVLGCGALLLLALLLG.

It belongs to the CN hydrolase family. Apolipoprotein N-acyltransferase subfamily.

It is found in the cell inner membrane. The enzyme catalyses N-terminal S-1,2-diacyl-sn-glyceryl-L-cysteinyl-[lipoprotein] + a glycerophospholipid = N-acyl-S-1,2-diacyl-sn-glyceryl-L-cysteinyl-[lipoprotein] + a 2-acyl-sn-glycero-3-phospholipid + H(+). It functions in the pathway protein modification; lipoprotein biosynthesis (N-acyl transfer). Catalyzes the phospholipid dependent N-acylation of the N-terminal cysteine of apolipoprotein, the last step in lipoprotein maturation. This chain is Apolipoprotein N-acyltransferase, found in Chromobacterium violaceum (strain ATCC 12472 / DSM 30191 / JCM 1249 / CCUG 213 / NBRC 12614 / NCIMB 9131 / NCTC 9757 / MK).